Consider the following 338-residue polypeptide: MARDEVRRILPADIKREVVVKDEKAETNPKWGFPPEKRPIEMHIQFGIINLDKPPGPTSHEVVAWVKRILNLNKAGHGGTLDPKVSGVLPVALERATRVVQALLPAGKEYVALMHLHGDVPEDKILAVMREFQGEIIQRPPLRSAVKRRLRTRKVYYIDVLEIEGRDVLFRVGVEAGTYIRSLIHHIGLALGVGAHMAELRRTRSGPFKEDETLVTLHDLVDYYHFWKEDGVEEYFRKAIQPMEKAVEHLPKVWIRDSAVAAVTHGADLAVPGVVKLHKGIKKGDLVAIMTLKDELVALGKAMMTTGEMLQKSKGIAVDVDKVFMPRDWYPKLWKEKE.

The active-site Nucleophile is the Asp82. The PUA domain occupies 250–325 (LPKVWIRDSA…IAVDVDKVFM (76 aa)).

The protein belongs to the pseudouridine synthase TruB family. Type 2 subfamily.

It carries out the reaction uridine(55) in tRNA = pseudouridine(55) in tRNA. Could be responsible for synthesis of pseudouridine from uracil-55 in the psi GC loop of transfer RNAs. In Thermococcus kodakarensis (strain ATCC BAA-918 / JCM 12380 / KOD1) (Pyrococcus kodakaraensis (strain KOD1)), this protein is Probable tRNA pseudouridine synthase B.